A 125-amino-acid polypeptide reads, in one-letter code: MPRPMKWRKVCCLPESNRFGPLDLNAGDQNQVKMTVDEYETIRLIDLEGFTQEECAKKMNVARTTVQGIYIEARKKLAESLVNGKVLQIEGGEYRLCDGLGNGCGQGCYKRRRRMGCSGKEEGED.

Belongs to the UPF0251 family.

The sequence is that of UPF0251 protein DSY3441 from Desulfitobacterium hafniense (strain Y51).